The sequence spans 183 residues: Adenylate kinase (183 aa).

Residue 12–17 (GAGKGT) participates in ATP binding. An NMP region spans residues 32-61 (STGDLLRSEVAAGTALGQEAEAVMNRGELV). AMP-binding positions include T33, R38, 59 to 61 (ELV), 86 to 89 (GFPR), and Q93. The interval 127 to 133 (ARGRDDD) is LID. R128 provides a ligand contact to ATP. R130 and R141 together coordinate AMP. Position 169 (G169) interacts with ATP.

It belongs to the adenylate kinase family. Monomer.

It is found in the cytoplasm. It catalyses the reaction AMP + ATP = 2 ADP. It participates in purine metabolism; AMP biosynthesis via salvage pathway; AMP from ADP: step 1/1. In terms of biological role, catalyzes the reversible transfer of the terminal phosphate group between ATP and AMP. Plays an important role in cellular energy homeostasis and in adenine nucleotide metabolism. This is Adenylate kinase from Parasynechococcus marenigrum (strain WH8102).